The chain runs to 209 residues: Small ribosomal subunit protein uS3 (209 aa).

A KH type-2 domain is found at 17-86 (IDEFLEKELR…NPQIEVEEIK (70 aa)).

This sequence belongs to the universal ribosomal protein uS3 family. In terms of assembly, part of the 30S ribosomal subunit.

In terms of biological role, binds the lower part of the 30S subunit head. The chain is Small ribosomal subunit protein uS3 from Thermococcus kodakarensis (strain ATCC BAA-918 / JCM 12380 / KOD1) (Pyrococcus kodakaraensis (strain KOD1)).